A 202-amino-acid polypeptide reads, in one-letter code: ATP-dependent Clp protease proteolytic subunit (202 aa).

Serine 106 functions as the Nucleophile in the catalytic mechanism. Histidine 131 is an active-site residue.

It belongs to the peptidase S14 family. As to quaternary structure, fourteen ClpP subunits assemble into 2 heptameric rings which stack back to back to give a disk-like structure with a central cavity, resembling the structure of eukaryotic proteasomes.

It is found in the cytoplasm. It catalyses the reaction Hydrolysis of proteins to small peptides in the presence of ATP and magnesium. alpha-casein is the usual test substrate. In the absence of ATP, only oligopeptides shorter than five residues are hydrolyzed (such as succinyl-Leu-Tyr-|-NHMec, and Leu-Tyr-Leu-|-Tyr-Trp, in which cleavage of the -Tyr-|-Leu- and -Tyr-|-Trp bonds also occurs).. Functionally, cleaves peptides in various proteins in a process that requires ATP hydrolysis. Has a chymotrypsin-like activity. Plays a major role in the degradation of misfolded proteins. This Albidiferax ferrireducens (strain ATCC BAA-621 / DSM 15236 / T118) (Rhodoferax ferrireducens) protein is ATP-dependent Clp protease proteolytic subunit.